A 474-amino-acid chain; its full sequence is Pyruvate kinase (474 aa).

Substrate is bound at residue R32. Residues N34, S36, and D66 each coordinate K(+). 34 to 37 (NFSH) lines the ATP pocket. 2 residues coordinate ATP: R73 and K155. Residue E221 coordinates Mg(2+). G244, D245, and T277 together coordinate substrate. D245 is a binding site for Mg(2+).

This sequence belongs to the pyruvate kinase family. Homotetramer. Mg(2+) serves as cofactor. The cofactor is K(+).

It carries out the reaction pyruvate + ATP = phosphoenolpyruvate + ADP + H(+). The protein operates within carbohydrate degradation; glycolysis; pyruvate from D-glyceraldehyde 3-phosphate: step 5/5. In Clostridium perfringens (strain 13 / Type A), this protein is Pyruvate kinase (pykF).